The following is a 364-amino-acid chain: Chorismate synthase (364 aa).

Residues arginine 48 and arginine 54 each coordinate NADP(+). FMN contacts are provided by residues 130–132 (RSS), 242–243 (NA), glycine 287, 302–306 (KPTSS), and arginine 328.

The protein belongs to the chorismate synthase family. As to quaternary structure, homotetramer. FMNH2 is required as a cofactor.

The catalysed reaction is 5-O-(1-carboxyvinyl)-3-phosphoshikimate = chorismate + phosphate. It functions in the pathway metabolic intermediate biosynthesis; chorismate biosynthesis; chorismate from D-erythrose 4-phosphate and phosphoenolpyruvate: step 7/7. Functionally, catalyzes the anti-1,4-elimination of the C-3 phosphate and the C-6 proR hydrogen from 5-enolpyruvylshikimate-3-phosphate (EPSP) to yield chorismate, which is the branch point compound that serves as the starting substrate for the three terminal pathways of aromatic amino acid biosynthesis. This reaction introduces a second double bond into the aromatic ring system. This chain is Chorismate synthase, found in Allorhizobium ampelinum (strain ATCC BAA-846 / DSM 112012 / S4) (Agrobacterium vitis (strain S4)).